Here is a 132-residue protein sequence, read N- to C-terminus: MEHKEVVLLLLLFLKSAPTETGPSVQECYHSNGQSYRGTYFTTVTGRTCQAWSSMTPHQHSRTPEKYPNDGLISNYCRNPDCSAGPWCYTTDPNVRWEYCNLTRCSDDEGTVFVPLTVIPVPSLEDSFIQVA.

Positions 1–21 (MEHKEVVLLLLLFLKSAPTET) are cleaved as a signal peptide. Residues 27–105 (ECYHSNGQSY…RWEYCNLTRC (79 aa)) form the Kringle domain. 3 cysteine pairs are disulfide-bonded: Cys-28–Cys-105, Cys-49–Cys-88, and Cys-77–Cys-100. An N-linked (GlcNAc...) asparagine glycan is attached at Asn-101.

Expressed in liver but not in other tissues tested.

It localises to the secreted. In Homo sapiens (Human), this protein is Putative apolipoprotein(a)-like protein 2 (LPAL2).